Here is a 512-residue protein sequence, read N- to C-terminus: 2,3-bisphosphoglycerate-independent phosphoglycerate mutase (512 aa).

Mn(2+)-binding residues include D11 and S61. The active-site Phosphoserine intermediate is S61. Residues H122, 152 to 153 (RD), R184, R190, 259 to 262 (RADR), and K332 contribute to the substrate site. Mn(2+)-binding residues include D399, H403, D440, H441, and H459.

Belongs to the BPG-independent phosphoglycerate mutase family. Monomer. The cofactor is Mn(2+).

The enzyme catalyses (2R)-2-phosphoglycerate = (2R)-3-phosphoglycerate. Its pathway is carbohydrate degradation; glycolysis; pyruvate from D-glyceraldehyde 3-phosphate: step 3/5. Functionally, catalyzes the interconversion of 2-phosphoglycerate and 3-phosphoglycerate. In Francisella philomiragia subsp. philomiragia (strain ATCC 25017 / CCUG 19701 / FSC 153 / O#319-036), this protein is 2,3-bisphosphoglycerate-independent phosphoglycerate mutase.